Reading from the N-terminus, the 861-residue chain is Probable beta-glucosidase A (861 aa).

A signal peptide spans 1-19 (MKLGWIEVAALAAASVVSA). Residues N62, N212, and N253 are each glycosylated (N-linked (GlcNAc...) asparagine). D281 is an active-site residue. N-linked (GlcNAc...) asparagine glycans are attached at residues N316, N323, N355, N443, N524, N543, N565, N669, N713, and N846.

The protein belongs to the glycosyl hydrolase 3 family.

It is found in the secreted. It catalyses the reaction Hydrolysis of terminal, non-reducing beta-D-glucosyl residues with release of beta-D-glucose.. Its pathway is glycan metabolism; cellulose degradation. Functionally, beta-glucosidases are one of a number of cellulolytic enzymes involved in the degradation of cellulosic biomass. Catalyzes the last step releasing glucose from the inhibitory cellobiose. This Aspergillus flavus (strain ATCC 200026 / FGSC A1120 / IAM 13836 / NRRL 3357 / JCM 12722 / SRRC 167) protein is Probable beta-glucosidase A (bglA).